Here is a 337-residue protein sequence, read N- to C-terminus: MLVLGIETSCDETGVALYDSSKGLLAHRLYSQVDEHAMYGGVVPEIASRDHLRKLLPLVREVLAAGGVRRTAIGGIAYTAGPGLIGALLVGAAVARSLAWAWSVPAIAVHHMEGHLLAPLLEPEPPEFPFVALLVSGGHTLLVEVRGIGVYQVLGESLDDAAGEAFDKTAKLLGLGYPGGPALARLAEKGRAERFHFPRPMTDRPGLDFSFSGLKTHALNVLAALPGTPQDKADIACAFQAAIVDTLVLKCRRAMRETGLGRLVVAGGVSANQAVRKGLQAMAESERYRVYFPRPEFCTDNGAMIAFAGCWRLRAGQFEPSAIEARARWAMETLTAV.

The Fe cation site is built by histidine 111 and histidine 115. Substrate-binding positions include 134–138, aspartate 167, glycine 180, and asparagine 272; that span reads LVSGG. Aspartate 300 serves as a coordination point for Fe cation.

The protein belongs to the KAE1 / TsaD family. Requires Fe(2+) as cofactor.

It localises to the cytoplasm. It catalyses the reaction L-threonylcarbamoyladenylate + adenosine(37) in tRNA = N(6)-L-threonylcarbamoyladenosine(37) in tRNA + AMP + H(+). Required for the formation of a threonylcarbamoyl group on adenosine at position 37 (t(6)A37) in tRNAs that read codons beginning with adenine. Is involved in the transfer of the threonylcarbamoyl moiety of threonylcarbamoyl-AMP (TC-AMP) to the N6 group of A37, together with TsaE and TsaB. TsaD likely plays a direct catalytic role in this reaction. This chain is tRNA N6-adenosine threonylcarbamoyltransferase, found in Methylococcus capsulatus (strain ATCC 33009 / NCIMB 11132 / Bath).